Here is a 328-residue protein sequence, read N- to C-terminus: DNA-directed RNA polymerase subunit alpha (328 aa).

Positions 1–230 are alpha N-terminal domain (alpha-NTD); it reads MNKIKITPSV…QSQMEIFTND (230 aa). Positions 243–328 are alpha C-terminal domain (alpha-CTD); sequence NSEIFYQPLD…ILKKIEQNKS (86 aa).

The protein belongs to the RNA polymerase alpha chain family. Homodimer. The RNAP catalytic core consists of 2 alpha, 1 beta, 1 beta' and 1 omega subunit. When a sigma factor is associated with the core the holoenzyme is formed, which can initiate transcription.

The enzyme catalyses RNA(n) + a ribonucleoside 5'-triphosphate = RNA(n+1) + diphosphate. Its function is as follows. DNA-dependent RNA polymerase catalyzes the transcription of DNA into RNA using the four ribonucleoside triphosphates as substrates. This Nitratiruptor sp. (strain SB155-2) protein is DNA-directed RNA polymerase subunit alpha.